The following is a 188-amino-acid chain: Elongation factor P-like protein (188 aa).

Belongs to the elongation factor P family.

The sequence is that of Elongation factor P-like protein from Vibrio parahaemolyticus serotype O3:K6 (strain RIMD 2210633).